The primary structure comprises 122 residues: Large ribosomal subunit protein uL14c (122 aa).

The protein belongs to the universal ribosomal protein uL14 family. Part of the 50S ribosomal subunit.

It localises to the plastid. The protein localises to the chloroplast. Its function is as follows. Binds to 23S rRNA. The polypeptide is Large ribosomal subunit protein uL14c (Cycas taitungensis (Prince sago)).